We begin with the raw amino-acid sequence, 187 residues long: MSNVSFLELQYKLSKNKMLRKPSRMFSRDRQSSGLSSPGPGGFSQPSVNEMRRVFSRFDLDKDGKISQTEYKVVLRALGQERAIEDVPKIFKAVDLDGDGFIDFREFIDAYKRSGGIRSSDIRNSFWTFDLNGDGKISAEEVMSVLWKLGERCSLEDCNRMVRAVDADGDGLVNMEEFIKMMSSNNV.

The tract at residues 21–47 (KPSRMFSRDRQSSGLSSPGPGGFSQPS) is disordered. Low complexity predominate over residues 32-47 (SSGLSSPGPGGFSQPS). EF-hand domains are found at residues 46–81 (PSVN…LGQE), 82–117 (RAIE…SGGI), 129–152 (FDLN…LGER), and 153–187 (CSLE…SNNV). Asp-59, Asp-61, Asp-63, Lys-65, Glu-70, Asp-95, Asp-97, Asp-99, Glu-106, Asp-130, Asn-132, Asp-134, Lys-136, Glu-141, Asp-166, Asp-168, Asp-170, and Glu-177 together coordinate Ca(2+).

This sequence belongs to the calmodulin family.

Functionally, potential calcium sensor. The polypeptide is Calmodulin-like protein 30 (Arabidopsis thaliana (Mouse-ear cress)).